The chain runs to 1032 residues: Putative oxidoreductase YgfK (1032 aa).

The 4Fe-4S ferredoxin-type domain occupies arginine 928 to lysine 958. [4Fe-4S] cluster is bound by residues cysteine 938, cysteine 941, cysteine 944, and cysteine 948.

[4Fe-4S] cluster is required as a cofactor.

Its function is as follows. Could be an iron-sulfur flavoprotein with NADPH:O(2) oxidoreductase activity. This chain is Putative oxidoreductase YgfK (ygfK), found in Escherichia coli O157:H7.